The sequence spans 268 residues: tRNA pseudouridine synthase A (268 aa).

Asp-52 serves as the catalytic Nucleophile. Residue Tyr-110 coordinates substrate.

This sequence belongs to the tRNA pseudouridine synthase TruA family. In terms of assembly, homodimer.

The catalysed reaction is uridine(38/39/40) in tRNA = pseudouridine(38/39/40) in tRNA. In terms of biological role, formation of pseudouridine at positions 38, 39 and 40 in the anticodon stem and loop of transfer RNAs. The chain is tRNA pseudouridine synthase A from Prochlorococcus marinus (strain MIT 9515).